Reading from the N-terminus, the 2159-residue chain is Calpain-type cysteine protease DEK1 (2159 aa).

An N-terminal signal peptide occupies residues 1–33; sequence MEGEGHHGVVLACSICGFLFAVLSPFSFWVLWA. Residues 34–70 lie on the Extracellular side of the membrane; the sequence is VNWRPWRLYSWIYARKWPTYVQGPQLSTLCSLLTLCA. The helical transmembrane segment at 71–91 threads the bilayer; that stretch reads WLVVISPIAVLLVWGSVLIAL. The Cytoplasmic portion of the chain corresponds to 92–95; it reads MERN. Residues 96–116 traverse the membrane as a helical segment; the sequence is IIGLAVIMAGVALLLSFYSIM. At 117-127 the chain is on the extracellular side; that stretch reads LWWRTQWQSSE. The helical transmembrane segment at 128–148 threads the bilayer; it reads AVAYLLLLAVCLLCAYDFCAI. Topologically, residues 149–164 are cytoplasmic; the sequence is YVTAGASASELNSPSG. The chain crosses the membrane as a helical span at residues 165–185; that stretch reads FFFGVSVISLAINMLFICKIL. Residues 186–236 are Extracellular-facing; the sequence is FNVSGFDVDEYVRRSYKFAYSDCVEVAPVSCSPEPPDPSELYMTKSSRVKH. A helical membrane pass occupies residues 237–257; sequence LGLLYISSLLVLVGYSILYGL. The Cytoplasmic segment spans residues 258 to 264; sequence TSKEARW. The helical transmembrane segment at 265–285 threads the bilayer; sequence LGALTSVAVVILDWNLGLCSF. Topologically, residues 286–294 are extracellular; it reads RFELLKSRM. A helical membrane pass occupies residues 295 to 315; it reads IVLFVAGTSRAFLVSFGVHYW. Over 316-320 the chain is Cytoplasmic; the sequence is YLGHC. Residues 321 to 341 form a helical membrane-spanning segment; that stretch reads ISYAFVASVLLSAAVSSWLSI. The Extracellular segment spans residues 342 to 623; it reads SNPSVARIDA…LIFHHLAGSP (282 aa). A disordered region spans residues 365-409; the sequence is RKGQNSSSNSSEGCGSSVKRSSGSVEAGQNGNAMDSMYRSNSQSD. Over residues 369-381 the composition is skewed to low complexity; it reads NSSSNSSEGCGSS. The span at 382–409 shows a compositional bias: polar residues; that stretch reads VKRSSGSVEAGQNGNAMDSMYRSNSQSD. The chain crosses the membrane as a helical span at residues 624 to 644; the sequence is IRAFIVFTVMFIIETATVAIY. The Cytoplasmic segment spans residues 645-660; that stretch reads RPETIKVINATHEQFE. The helical transmembrane segment at 661-681 threads the bilayer; it reads FGFSILLLSPVVCSIMAFIWS. Residues 682–694 are Extracellular-facing; the sequence is LRAEEMLMTSKPQ. Residues 695–715 form a helical membrane-spanning segment; the sequence is KYGFIAWLLSTCVGLFLSFLS. The Cytoplasmic portion of the chain corresponds to 716-719; it reads KSSV. Residues 720-740 traverse the membrane as a helical segment; sequence ILGLSLTVPLMVACLSFAVPI. Topologically, residues 741–770 are extracellular; the sequence is WIRNGYSFWIPGREFANRENVSQAPGEKER. Residues 771 to 791 traverse the membrane as a helical segment; that stretch reads ALFVITIAVFTASIIGLGAIV. At 792–822 the chain is on the cytoplasmic side; that stretch reads SAKPLDALGYKGWDADKNSSYSPYATSMYLG. Residues 823–843 traverse the membrane as a helical segment; sequence WALSSTIAVITTGLIPIVAWF. Topologically, residues 844-853 are extracellular; sequence ATYRFSPSSA. A helical transmembrane segment spans residues 854–874; sequence ICVGLFATVLVSFCGASYWGV. At 875–887 the chain is on the cytoplasmic side; the sequence is VNSREDGVPLKAD. A helical membrane pass occupies residues 888 to 908; it reads FLAALLPLLCIPAFFSLFTGL. The Extracellular segment spans residues 909 to 921; that stretch reads YKWKDDDWKISRG. The chain crosses the membrane as a helical span at residues 922–942; that stretch reads VYLFVGMGMLLLFGAVAAVIV. Over 943-946 the chain is Cytoplasmic; it reads TIRP. Residues 947-967 form a helical membrane-spanning segment; sequence WTVGVACLVAILFLVFVIGVI. Residues 968-981 are Extracellular-facing; sequence HYWTSNNFYLTRTQ. The helical transmembrane segment at 982 to 1002 threads the bilayer; the sequence is MLLVCSIAFLLALAAFLMGLF. Over 1003–1016 the chain is Cytoplasmic; the sequence is HGKPFVGASIGYFS. A helical membrane pass occupies residues 1017 to 1037; the sequence is FIFLLTGRALTVLLSPPIVVY. The Extracellular segment spans residues 1038-1060; the sequence is SPRVLPVYVYDAHADSAKNVSYA. Residues 1061 to 1081 traverse the membrane as a helical segment; the sequence is FLILYGIALATEVWGVIASLI. At 1082-2159 the chain is on the cytoplasmic side; it reads MNPPFVGAGV…SKASIRLEAV (1078 aa). Serine 1371 and serine 1376 each carry phosphoserine. A Calpain catalytic 1 domain is found at 1417-1609; the sequence is TGRHCGELDL…MSPAEYGFFD (193 aa). Phosphoserine is present on serine 1665. One can recognise a Calpain catalytic 2 domain in the interval 1703–2005; that stretch reads NFTDQEFPPE…FRSIYVCRVY (303 aa). Residues cysteine 1769, histidine 1927, and asparagine 1947 contribute to the active site.

It belongs to the peptidase C2 family. Post-translationally, autocatalytic proteolytic cleavage leading to the production of mainly cytoplasmic localized subproducts of about 85 and 120 kDa. In terms of tissue distribution, expressed in most tissues at low levels ranging from 30 to 55 ppm. Present in all endosperm cells at transcript level, but confined to aleurones at protein level.

The protein resides in the endoplasmic reticulum membrane. Its subcellular location is the cytoplasm. The protein localises to the cell membrane. It is found in the endosome membrane. Essential protease involved in epiderm development. Required for aleurone cell development in the endosperm probably by maintaining and restricting the aleurone and embryonic epidermal L1 cell-layer fates as well as meristems organization. Involved in the maintenance of adaxial/abaxial axis information in developing leaves, probably by regulating cell proliferation and expansion. Does not need calcium ions to be active. The protein is Calpain-type cysteine protease DEK1 (DEK1) of Zea mays (Maize).